Here is a 752-residue protein sequence, read N- to C-terminus: Multifunctional tryptophan biosynthesis protein (752 aa).

One can recognise a Glutamine amidotransferase type-1 domain in the interval Asn-23–Asn-223. Gly-74–Gly-76 is an L-glutamine binding site. The Nucleophile; for GATase activity role is filled by Cys-102. L-glutamine is bound by residues Gln-106 and Ser-152–Leu-153. Active-site for GATase activity residues include His-197 and Glu-199. The segment at Ile-239 to Leu-503 is indole-3-glycerol phosphate synthase. The tract at residues Leu-519–Gln-752 is N-(5'-phosphoribosyl)anthranilate isomerase.

It carries out the reaction N-(5-phospho-beta-D-ribosyl)anthranilate = 1-(2-carboxyphenylamino)-1-deoxy-D-ribulose 5-phosphate. The catalysed reaction is 1-(2-carboxyphenylamino)-1-deoxy-D-ribulose 5-phosphate + H(+) = (1S,2R)-1-C-(indol-3-yl)glycerol 3-phosphate + CO2 + H2O. It catalyses the reaction chorismate + L-glutamine = anthranilate + pyruvate + L-glutamate + H(+). The protein operates within amino-acid biosynthesis; L-tryptophan biosynthesis; L-tryptophan from chorismate: step 1/5. Its pathway is amino-acid biosynthesis; L-tryptophan biosynthesis; L-tryptophan from chorismate: step 3/5. It functions in the pathway amino-acid biosynthesis; L-tryptophan biosynthesis; L-tryptophan from chorismate: step 4/5. Its function is as follows. Trifunctional enzyme bearing the Gln amidotransferase (GATase) domain of anthranilate synthase, indole-glycerolphosphate synthase, and phosphoribosylanthranilate isomerase activities. The chain is Multifunctional tryptophan biosynthesis protein (trpC) from Penicillium chrysogenum (Penicillium notatum).